The sequence spans 240 residues: Flagellar L-ring protein (240 aa).

Residues 1-20 (MIRNFLLFFMPIYAILFLSG) form the signal peptide. C21 carries N-palmitoyl cysteine lipidation. A lipid anchor (S-diacylglycerol cysteine) is attached at C21.

This sequence belongs to the FlgH family. The basal body constitutes a major portion of the flagellar organelle and consists of four rings (L,P,S, and M) mounted on a central rod.

It is found in the cell outer membrane. The protein localises to the bacterial flagellum basal body. Its function is as follows. Assembles around the rod to form the L-ring and probably protects the motor/basal body from shearing forces during rotation. The protein is Flagellar L-ring protein of Sulfurimonas denitrificans (strain ATCC 33889 / DSM 1251) (Thiomicrospira denitrificans (strain ATCC 33889 / DSM 1251)).